A 435-amino-acid polypeptide reads, in one-letter code: Serine hydroxymethyltransferase (435 aa).

Residues Leu-131 and 135–137 contribute to the (6S)-5,6,7,8-tetrahydrofolate site; that span reads GHL. Residue Lys-240 is modified to N6-(pyridoxal phosphate)lysine.

Belongs to the SHMT family. Homodimer. Pyridoxal 5'-phosphate is required as a cofactor.

It localises to the cytoplasm. It catalyses the reaction (6R)-5,10-methylene-5,6,7,8-tetrahydrofolate + glycine + H2O = (6S)-5,6,7,8-tetrahydrofolate + L-serine. Its pathway is one-carbon metabolism; tetrahydrofolate interconversion. It functions in the pathway amino-acid biosynthesis; glycine biosynthesis; glycine from L-serine: step 1/1. Catalyzes the reversible interconversion of serine and glycine with tetrahydrofolate (THF) serving as the one-carbon carrier. This reaction serves as the major source of one-carbon groups required for the biosynthesis of purines, thymidylate, methionine, and other important biomolecules. Also exhibits THF-independent aldolase activity toward beta-hydroxyamino acids, producing glycine and aldehydes, via a retro-aldol mechanism. The chain is Serine hydroxymethyltransferase from Bifidobacterium longum subsp. infantis (strain ATCC 15697 / DSM 20088 / JCM 1222 / NCTC 11817 / S12).